The following is a 462-amino-acid chain: Cysteine--tRNA ligase (462 aa).

C28 is a Zn(2+) binding site. A 'HIGH' region motif is present at residues 30-40 (VTAYDLCHIGH). C209, H234, and E238 together coordinate Zn(2+). The 'KMSKS' region motif lies at 266–270 (KMSKS). K269 contacts ATP.

The protein belongs to the class-I aminoacyl-tRNA synthetase family. As to quaternary structure, monomer. It depends on Zn(2+) as a cofactor.

It is found in the cytoplasm. The enzyme catalyses tRNA(Cys) + L-cysteine + ATP = L-cysteinyl-tRNA(Cys) + AMP + diphosphate. This is Cysteine--tRNA ligase from Baumannia cicadellinicola subsp. Homalodisca coagulata.